Here is a 434-residue protein sequence, read N- to C-terminus: ATP-dependent protease ATPase subunit HslU (434 aa).

ATP contacts are provided by residues Ile18, 60–65, Asp247, Glu312, and Arg384; that span reads GVGKTE.

This sequence belongs to the ClpX chaperone family. HslU subfamily. In terms of assembly, a double ring-shaped homohexamer of HslV is capped on each side by a ring-shaped HslU homohexamer. The assembly of the HslU/HslV complex is dependent on binding of ATP.

Its subcellular location is the cytoplasm. Its function is as follows. ATPase subunit of a proteasome-like degradation complex; this subunit has chaperone activity. The binding of ATP and its subsequent hydrolysis by HslU are essential for unfolding of protein substrates subsequently hydrolyzed by HslV. HslU recognizes the N-terminal part of its protein substrates and unfolds these before they are guided to HslV for hydrolysis. In Brucella suis (strain ATCC 23445 / NCTC 10510), this protein is ATP-dependent protease ATPase subunit HslU.